A 395-amino-acid chain; its full sequence is Zinc-regulated GTPase metalloprotein activator 1E (395 aa).

Residues 1–22 are disordered; sequence MLPAVGSVDEEEDPAEEDCPEL. Residues 8-20 show a composition bias toward acidic residues; that stretch reads VDEEEDPAEEDCP. The psi-PxLVp motif motif lies at 17–24; the sequence is EDCPELVP. Residue 49–56 participates in GTP binding; sequence GYLGAGKT. Cysteine 107, cysteine 109, and cysteine 110 together coordinate Zn(2+). The CXCC motif motif lies at 107-110; that stretch reads CLCC. Residues 110 to 114 and 203 to 206 each bind GTP; these read CSVKD and NKTD. Positions 274–377 constitute a CobW C-terminal domain; the sequence is IVTITFEVPG…ILKQLFIATV (104 aa).

Belongs to the SIMIBI class G3E GTPase family. ZNG1 subfamily.

The protein resides in the nucleus. The enzyme catalyses GTP + H2O = GDP + phosphate + H(+). In terms of biological role, zinc chaperone that directly transfers zinc cofactor to target metalloproteins, thereby activating them. Catalyzes zinc insertion into the active site of methionine aminopeptidase METAP1, which function to cleave the initiator methionine from polypeptides during or after protein translation. Mechanistically, the N-terminal psi-PxLVp motif binds to the C6H2-type zinc finger of inactive form of METAP1. After formation of the docked complex, zinc is transferred from the CXCC motif in the GTPase domain of ZNG1E to the zinc binding site in the peptidase domain of METAP1 in a process requiring GTP hydrolysis. GTP/GDP exchange is required for release of active METAP1. The sequence is that of Zinc-regulated GTPase metalloprotein activator 1E from Homo sapiens (Human).